We begin with the raw amino-acid sequence, 293 residues long: Putative metal ABC transporter substrate-binding protein Hpf (293 aa).

The N-terminal stretch at 1–22 (MRNSFKIMTALALGLFAMQANA) is a signal peptide. Residues 23 to 48 (KFKVVTTFTVIQDIAQNVAGNAATVE) are interaction with host components. His58, His123, Glu189, and Asp264 together coordinate a divalent metal cation.

Belongs to the bacterial solute-binding protein 9 family. As to quaternary structure, interacts with host laminin and vitronectin. Can interact with both immobilized and soluble vitronectin.

It is found in the cell outer membrane. It localises to the cell surface. The protein localises to the periplasm. Its function is as follows. Part of an ATP-binding cassette (ABC) transport system involved in metal import. Binds a metal with high affinity and specificity and delivers it to the membrane permease for translocation into the cytoplasm. Acts as an adhesin that promotes binding of H.influenzae to host laminin and vitronectin. In addition, interaction with serum vitronectin plays an important role in bacterial serum resistance. This chain is Putative metal ABC transporter substrate-binding protein Hpf (hpf), found in Haemophilus influenzae (strain NTHi 3655).